Consider the following 1355-residue polypeptide: DNA-directed RNA polymerase subunit beta' (1355 aa).

Zn(2+) is bound by residues cysteine 219, cysteine 293, cysteine 300, and cysteine 303. The interval 1331–1355 (AEVEVDDEVDDDYEDDDEDDDDYED) is disordered.

The protein belongs to the RNA polymerase beta' chain family. RpoC2 subfamily. In cyanobacteria the RNAP catalytic core is composed of 2 alpha, 1 beta, 1 beta', 1 gamma and 1 omega subunit. When a sigma factor is associated with the core the holoenzyme is formed, which can initiate transcription. Zn(2+) is required as a cofactor.

The enzyme catalyses RNA(n) + a ribonucleoside 5'-triphosphate = RNA(n+1) + diphosphate. Its function is as follows. DNA-dependent RNA polymerase catalyzes the transcription of DNA into RNA using the four ribonucleoside triphosphates as substrates. The polypeptide is DNA-directed RNA polymerase subunit beta' (Nostoc sp. (strain PCC 7120 / SAG 25.82 / UTEX 2576)).